The chain runs to 154 residues: Endoribonuclease YbeY (154 aa).

H118, H122, and H128 together coordinate Zn(2+).

Belongs to the endoribonuclease YbeY family. Requires Zn(2+) as cofactor.

It is found in the cytoplasm. Single strand-specific metallo-endoribonuclease involved in late-stage 70S ribosome quality control and in maturation of the 3' terminus of the 16S rRNA. The protein is Endoribonuclease YbeY of Macrococcus caseolyticus (strain JCSC5402) (Macrococcoides caseolyticum).